A 273-amino-acid chain; its full sequence is XIAP-associated factor 1 (273 aa).

Residues 22–80 (LHEAHCLRFIVLCPECEEPIPESKMKEHMEVVHQQTKESQQHPAKCKFCELAVQLSNLD) form a TRAF-type zinc finger. A disordered region spans residues 181-228 (GNRRSTVSKDVRPKTKNRNSSTKRETKKQNGTVALPLKSGLQQRADLP).

As to quaternary structure, interacts with BIRC1, BIRC2, BIRC3, BIRC4, BIRC7 and BIRC8. Part of an complex consisting of BIRC4, XAF1 and BIRC5; the complex formation requires IFN-beta stimulation. Interacts with RNF114, the interaction increases XAF1 stability and proapoptotic effects, and may regulate IFN signaling.

It is found in the cytoplasm. The protein localises to the nucleus. It localises to the mitochondrion. In terms of biological role, seems to function as a negative regulator of members of the IAP (inhibitor of apoptosis protein) family. Inhibits anti-caspase activity of BIRC4. Induces cleavage and inactivation of BIRC4 independent of caspase activation. Mediates TNF-alpha-induced apoptosis and is involved in apoptosis in trophoblast cells. May inhibit BIRC4 indirectly by activating the mitochondrial apoptosis pathway. After translocation to mitochondria, promotes translocation of BAX to mitochondria and cytochrome c release from mitochondria. Seems to promote the redistribution of BIRC4 from the cytoplasm to the nucleus, probably independent of BIRC4 inactivation which seems to occur in the cytoplasm. The BIRC4-XAF1 complex mediates down-regulation of BIRC5/survivin; the process requires the E3 ligase activity of BIRC4. Seems to be involved in cellular sensitivity to the proapoptotic actions of TRAIL. May be a tumor suppressor by mediating apoptosis resistance of cancer cells. The sequence is that of XIAP-associated factor 1 (Xaf1) from Mus musculus (Mouse).